The chain runs to 622 residues: Cilia- and flagella-associated protein 206 (622 aa).

It belongs to the CFAP206 family.

It localises to the cytoplasm. The protein localises to the cytoskeleton. Its subcellular location is the cilium axoneme. It is found in the cilium basal body. Its function is as follows. Essential for sperm motility and is involved in the regulation of the beating frequency of motile cilia on the epithelial cells of the respiratory tract. Required for the establishment of radial spokes in sperm flagella. This chain is Cilia- and flagella-associated protein 206, found in Bos taurus (Bovine).